A 304-amino-acid chain; its full sequence is MDKDLTYQIKELKKEKNAIILAHFYQPPEIQELADAVGDSYYLSEIARDCKEEVVVFCGVRFMGESAKILSPEKTVLMPVSNAGCAMADMVDEEGVIKLKQQYPNALVVCYINSTAKVKAHCDVSVTSSSAIKILENIDNKEIIFLPDKNLGGYIAEQFPDKNFIFWDGYCKYHNNIRAEEIIELKDKYKNAEVLVHPECKKEIRDLGDYVGSTSGIIKYATNSKNKDFIIATEEGILHELKKNNPNKNFYIPGGKILCTDMKKTTLENLYSTLKNMENEVIVEDEIMEKALNSLLNMHKLAEG.

Iminosuccinate-binding residues include histidine 23 and serine 40. Residue cysteine 85 coordinates [4Fe-4S] cluster. Residues 111–113 (YIN) and serine 128 each bind iminosuccinate. Cysteine 171 lines the [4Fe-4S] cluster pocket. Residues 197–199 (HPE) and threonine 214 contribute to the iminosuccinate site. Cysteine 259 contributes to the [4Fe-4S] cluster binding site.

Belongs to the quinolinate synthase family. Type 2 subfamily. The cofactor is [4Fe-4S] cluster.

The protein localises to the cytoplasm. It carries out the reaction iminosuccinate + dihydroxyacetone phosphate = quinolinate + phosphate + 2 H2O + H(+). It functions in the pathway cofactor biosynthesis; NAD(+) biosynthesis; quinolinate from iminoaspartate: step 1/1. Its function is as follows. Catalyzes the condensation of iminoaspartate with dihydroxyacetone phosphate to form quinolinate. The protein is Quinolinate synthase of Clostridioides difficile (strain 630) (Peptoclostridium difficile).